A 1212-amino-acid polypeptide reads, in one-letter code: Dermatan-sulfate epimerase-like protein (1212 aa).

The signal sequence occupies residues 1 to 20; it reads MALMFTGHLLFLALLMFAFS. 4 N-linked (GlcNAc...) asparagine glycosylation sites follow: N28, N666, N688, and N709. Transmembrane regions (helical) follow at residues 764 to 784 and 803 to 823; these read IIFPFGFKFNIAVGLILCISL and WILILVIALWFIELLDVWSTC. N-linked (GlcNAc...) asparagine glycosylation occurs at N874.

This sequence belongs to the dermatan-sulfate isomerase family. Expressed in different brain areas as well as in multiple other peripheral tissues.

Its subcellular location is the membrane. This chain is Dermatan-sulfate epimerase-like protein (DSEL), found in Homo sapiens (Human).